The primary structure comprises 185 residues: Large ribosomal subunit protein uL22 (185 aa).

A disordered region spans residues 157–185 (VAAPTPDEDAPKKKQSKKKMARQKLMQRD). Basic residues predominate over residues 169-178 (KKQSKKKMAR).

Belongs to the universal ribosomal protein uL22 family.

This is Large ribosomal subunit protein uL22 (RpL17) from Argas monolakensis (Mono lake bird tick).